The chain runs to 179 residues: Sec-independent protein translocase protein TatB (179 aa).

A helical transmembrane segment spans residues phenylalanine 2 to glycine 22. Positions leucine 98–leucine 109 are enriched in low complexity. A disordered region spans residues leucine 98–threonine 179.

This sequence belongs to the TatB family. As to quaternary structure, the Tat system comprises two distinct complexes: a TatABC complex, containing multiple copies of TatA, TatB and TatC subunits, and a separate TatA complex, containing only TatA subunits. Substrates initially bind to the TatABC complex, which probably triggers association of the separate TatA complex to form the active translocon.

Its subcellular location is the cell membrane. Functionally, part of the twin-arginine translocation (Tat) system that transports large folded proteins containing a characteristic twin-arginine motif in their signal peptide across membranes. Together with TatC, TatB is part of a receptor directly interacting with Tat signal peptides. TatB may form an oligomeric binding site that transiently accommodates folded Tat precursor proteins before their translocation. In Frankia casuarinae (strain DSM 45818 / CECT 9043 / HFP020203 / CcI3), this protein is Sec-independent protein translocase protein TatB.